Consider the following 494-residue polypeptide: Apolipoprotein N-acyltransferase (494 aa).

The next 6 membrane-spanning stretches (helical) occupy residues 16–36, 41–61, 62–82, 133–153, 173–193, and 202–222; these read TVGGLLAGVGLSQGGVVFIWI, LWASMAFPSAVFLWGLFAILL, SYRWLLYLHPLTWIGVPIAFS, LIWGLVEVGLAKSPFFWFGLG, GGLAALQLILGWWVWKIIFAF, and LFALGVCSLLLAHCIGWILLA. The CN hydrolase domain occupies 235-461; the sequence is WQTNIPTRQK…EGVGVIDINV (227 aa). Residue Glu-276 is the Proton acceptor of the active site. Lys-325 is a catalytic residue. Catalysis depends on Cys-373, which acts as the Nucleophile. Residues 468–488 form a helical membrane-spanning segment; that stretch reads YVRWGEIPLISSLLIVLCFIA.

The protein belongs to the CN hydrolase family. Apolipoprotein N-acyltransferase subfamily.

The protein localises to the cell inner membrane. It carries out the reaction N-terminal S-1,2-diacyl-sn-glyceryl-L-cysteinyl-[lipoprotein] + a glycerophospholipid = N-acyl-S-1,2-diacyl-sn-glyceryl-L-cysteinyl-[lipoprotein] + a 2-acyl-sn-glycero-3-phospholipid + H(+). It functions in the pathway protein modification; lipoprotein biosynthesis (N-acyl transfer). Functionally, catalyzes the phospholipid dependent N-acylation of the N-terminal cysteine of apolipoprotein, the last step in lipoprotein maturation. This is Apolipoprotein N-acyltransferase from Prochlorococcus marinus (strain SARG / CCMP1375 / SS120).